A 635-amino-acid chain; its full sequence is Threonine--tRNA ligase (635 aa).

In terms of domain architecture, TGS spans 1–61 (MVSIRLPDGS…DRDASLAIVT (61 aa)). The interval 242–533 (DHRKLGKQLD…LIEHHAGAMP (292 aa)) is catalytic. Cysteine 333, histidine 384, and histidine 510 together coordinate Zn(2+).

The protein belongs to the class-II aminoacyl-tRNA synthetase family. In terms of assembly, homodimer. The cofactor is Zn(2+).

Its subcellular location is the cytoplasm. It carries out the reaction tRNA(Thr) + L-threonine + ATP = L-threonyl-tRNA(Thr) + AMP + diphosphate + H(+). In terms of biological role, catalyzes the attachment of threonine to tRNA(Thr) in a two-step reaction: L-threonine is first activated by ATP to form Thr-AMP and then transferred to the acceptor end of tRNA(Thr). Also edits incorrectly charged L-seryl-tRNA(Thr). The sequence is that of Threonine--tRNA ligase from Burkholderia cenocepacia (strain ATCC BAA-245 / DSM 16553 / LMG 16656 / NCTC 13227 / J2315 / CF5610) (Burkholderia cepacia (strain J2315)).